The chain runs to 1561 residues: Synemin (1561 aa).

A head region spans residues M1–S10. A coil 1A region spans residues E11–R49. The interval E11 to N320 is interaction with DMD and UTRN. In terms of domain architecture, IF rod spans E11 to E322. A linker 1 region spans residues E50–A58. The segment at L59–T163 is coil 1B. Residues M164–S186 are linker 12. The segment at Y187–V300 is coil 2. The tail stretch occupies residues K301–F1561. Composition is skewed to polar residues over residues S371–V390 and S401–S421. Disordered stretches follow at residues S371–S421, D549–K574, and E591–T637. The span at G601–T624 shows a compositional bias: basic and acidic residues. Residues Q625–T637 show a composition bias toward polar residues. Phosphothreonine is present on T653. Residues S655, S778, S780, S1044, S1049, S1077, S1087, S1179, and S1182 each carry the phosphoserine modification. 2 disordered regions span residues S1033–G1061 and S1075–V1099. Residues V1086–V1099 show a composition bias toward polar residues. The tract at residues V1152–Q1453 is interaction with TLN1 and VCL. The segment at A1212–E1231 is disordered. The segment covering G1222–E1231 has biased composition (basic and acidic residues). The tract at residues A1242–G1557 is interaction with DMD and UTRN. S1425 carries the post-translational modification Phosphoserine. Residue R1481 is modified to Omega-N-methylarginine. Residues D1491 to G1519 are disordered.

It belongs to the intermediate filament family. As to quaternary structure, interacts with DES, DMD, DTNA, TLN1, UTRN and VCL. Isoform 1 and isoform 2 interact with GFAP and VIM. Isoform 2 and isoform 3 are detected in adult skeletal muscle, heart and bladder, whereas isoform 1 is only detected in adult bladder (at protein level).

It localises to the cytoplasm. Its subcellular location is the cytoskeleton. The protein resides in the cell junction. The protein localises to the adherens junction. In terms of biological role, type-VI intermediate filament (IF) which plays an important cytoskeletal role within the muscle cell cytoskeleton. It forms heteromeric IFs with desmin and/or vimentin, and via its interaction with cytoskeletal proteins alpha-dystrobrevin, dystrophin, talin-1, utrophin and vinculin, is able to link these heteromeric IFs to adherens-type junctions, such as to the costameres, neuromuscular junctions, and myotendinous junctions within striated muscle cells. The protein is Synemin of Mus musculus (Mouse).